Reading from the N-terminus, the 481-residue chain is Cytochrome P450 monooxygenase dpfgJ (481 aa).

The helical transmembrane segment at 23–43 (LVFTQAAVIGSILFVFLLGLY) threads the bilayer. Asn338 carries an N-linked (GlcNAc...) asparagine glycan. Residue Cys427 coordinates heme.

Belongs to the cytochrome P450 family. Requires heme as cofactor.

The protein resides in the membrane. It functions in the pathway secondary metabolite biosynthesis; terpenoid biosynthesis. Functionally, cytochrome P450 monooxygenase; part of the gene cluster that mediates the biosynthesis of diterpenoid pyrones. The first step of the pathway is the synthesis of the alpha-pyrone moiety by the polyketide synthase dpfgA via condensation of one acetyl-CoA starter unit with 3 malonyl-CoA units and 2 methylations. The alpha-pyrone is then combined with geranylgeranyl pyrophosphate (GGPP) formed by the GGPP synthase dpfgD through the action of the prenyltransferase dpfgC to yield a linear alpha-pyrone diterpenoid. Subsequent steps in the diterpenoid pyrone biosynthetic pathway involve the decalin core formation, which is initiated by the epoxidation of the C10-C11 olefin by the FAD-dependent oxidoreductase dpfgE, and is followed by a cyclization cascade catalyzed by the terpene cyclase dpfgB. The short chain dehydrogenase/reductase dpfgG then oxidizes the 8S hydroxy group to a ketone and the short chain dehydrogenase/reductase dpfgH reduces the ketone to the 8R hydroxy group to yield higginsianin B. Higginsianin B is further methylated by the methyltransferase dpfgI to produce the intermediate named FDDP B. The cytochrome P450 monooxygenase dfgpJ then catalyzes a three-step oxidation at C-27 to generate a carboxylic acid as well as C-26 hydroxylation. Finally, methyltransferase dpfgK methylates the carboxylic acid generated by dpfgJ, yielding the final diterpenoid pyrones from the pathway which were named FDDP D and FDDP E. This chain is Cytochrome P450 monooxygenase dpfgJ, found in Gibberella zeae (strain ATCC MYA-4620 / CBS 123657 / FGSC 9075 / NRRL 31084 / PH-1) (Wheat head blight fungus).